The sequence spans 347 residues: DNA-directed RNA polymerase subunit alpha (347 aa).

Positions 1–226 (MLISQRPTLS…ELFGLARELN (226 aa)) are alpha N-terminal domain (alpha-NTD). Residues 243–347 (HIASFALPID…SQDYAETEQL (105 aa)) form an alpha C-terminal domain (alpha-CTD) region. Residues 326–347 (TTGTWSTDGAYDSQDYAETEQL) form a disordered region.

Belongs to the RNA polymerase alpha chain family. In terms of assembly, homodimer. The RNAP catalytic core consists of 2 alpha, 1 beta, 1 beta' and 1 omega subunit. When a sigma factor is associated with the core the holoenzyme is formed, which can initiate transcription.

It catalyses the reaction RNA(n) + a ribonucleoside 5'-triphosphate = RNA(n+1) + diphosphate. Functionally, DNA-dependent RNA polymerase catalyzes the transcription of DNA into RNA using the four ribonucleoside triphosphates as substrates. This chain is DNA-directed RNA polymerase subunit alpha, found in Mycobacterium leprae (strain TN).